We begin with the raw amino-acid sequence, 169 residues long: Putative phosphoesterase SERP0604 (169 aa).

Catalysis depends on His34, which acts as the Proton donor. 2 consecutive short sequence motifs (HXTX) follow at residues 34–37 and 115–118; these read HITI and HFTI. The active-site Proton acceptor is His115.

This sequence belongs to the 2H phosphoesterase superfamily. YjcG family.

The sequence is that of Putative phosphoesterase SERP0604 from Staphylococcus epidermidis (strain ATCC 35984 / DSM 28319 / BCRC 17069 / CCUG 31568 / BM 3577 / RP62A).